Consider the following 299-residue polypeptide: 4-diphosphocytidyl-2-C-methyl-D-erythritol kinase (299 aa).

Lys11 is a catalytic residue. Position 94-104 (94-104 (PQGGGLGGGSS)) interacts with ATP. Asp136 is a catalytic residue.

Belongs to the GHMP kinase family. IspE subfamily.

It catalyses the reaction 4-CDP-2-C-methyl-D-erythritol + ATP = 4-CDP-2-C-methyl-D-erythritol 2-phosphate + ADP + H(+). Its pathway is isoprenoid biosynthesis; isopentenyl diphosphate biosynthesis via DXP pathway; isopentenyl diphosphate from 1-deoxy-D-xylulose 5-phosphate: step 3/6. In terms of biological role, catalyzes the phosphorylation of the position 2 hydroxy group of 4-diphosphocytidyl-2C-methyl-D-erythritol. The sequence is that of 4-diphosphocytidyl-2-C-methyl-D-erythritol kinase from Bordetella parapertussis (strain 12822 / ATCC BAA-587 / NCTC 13253).